A 201-amino-acid chain; its full sequence is Recombination protein RecR (201 aa).

The segment at 60-75 (CSCCGNVDTIDPCTVC) adopts a C4-type zinc-finger fold. The Toprim domain occupies 83–178 (SVIIVVEDVA…KITRLAHGVP (96 aa)).

It belongs to the RecR family.

May play a role in DNA repair. It seems to be involved in an RecBC-independent recombinational process of DNA repair. It may act with RecF and RecO. This is Recombination protein RecR from Sinorhizobium fredii (strain NBRC 101917 / NGR234).